A 235-amino-acid chain; its full sequence is 1-(5-phosphoribosyl)-5-[(5-phosphoribosylamino)methylideneamino] imidazole-4-carboxamide isomerase (235 aa).

Aspartate 8 functions as the Proton acceptor in the catalytic mechanism. Catalysis depends on aspartate 127, which acts as the Proton donor.

The protein belongs to the HisA/HisF family.

It localises to the cytoplasm. It catalyses the reaction 1-(5-phospho-beta-D-ribosyl)-5-[(5-phospho-beta-D-ribosylamino)methylideneamino]imidazole-4-carboxamide = 5-[(5-phospho-1-deoxy-D-ribulos-1-ylimino)methylamino]-1-(5-phospho-beta-D-ribosyl)imidazole-4-carboxamide. The protein operates within amino-acid biosynthesis; L-histidine biosynthesis; L-histidine from 5-phospho-alpha-D-ribose 1-diphosphate: step 4/9. This is 1-(5-phosphoribosyl)-5-[(5-phosphoribosylamino)methylideneamino] imidazole-4-carboxamide isomerase from Nautilia profundicola (strain ATCC BAA-1463 / DSM 18972 / AmH).